The following is a 260-amino-acid chain: Thiazole synthase (260 aa).

Lys96 functions as the Schiff-base intermediate with DXP in the catalytic mechanism. Residues Gly157, 184-185 (AG), and 206-207 (NT) contribute to the 1-deoxy-D-xylulose 5-phosphate site.

The protein belongs to the ThiG family. Homotetramer. Forms heterodimers with either ThiH or ThiS.

It is found in the cytoplasm. It catalyses the reaction [ThiS sulfur-carrier protein]-C-terminal-Gly-aminoethanethioate + 2-iminoacetate + 1-deoxy-D-xylulose 5-phosphate = [ThiS sulfur-carrier protein]-C-terminal Gly-Gly + 2-[(2R,5Z)-2-carboxy-4-methylthiazol-5(2H)-ylidene]ethyl phosphate + 2 H2O + H(+). The protein operates within cofactor biosynthesis; thiamine diphosphate biosynthesis. Functionally, catalyzes the rearrangement of 1-deoxy-D-xylulose 5-phosphate (DXP) to produce the thiazole phosphate moiety of thiamine. Sulfur is provided by the thiocarboxylate moiety of the carrier protein ThiS. In vitro, sulfur can be provided by H(2)S. In Rhodopseudomonas palustris (strain ATCC BAA-98 / CGA009), this protein is Thiazole synthase.